The sequence spans 296 residues: HTH-type transcriptional regulator GltR (296 aa).

An HTH lysR-type domain is found at 1-58 (MNIQLLQVFLTTAREGSISKAALTLNYAQSNVTNKIQQLENDLQTKLFYRHSRGITLT). A DNA-binding region (H-T-H motif) is located at residues 18 to 37 (ISKAALTLNYAQSNVTNKIQ).

Belongs to the LysR transcriptional regulatory family.

Functionally, positive regulator of glutamate biosynthesis (gltAB genes). Negatively regulates its own expression. This chain is HTH-type transcriptional regulator GltR (gltR), found in Bacillus subtilis (strain 168).